We begin with the raw amino-acid sequence, 785 residues long: AP-1 complex subunit gamma-like 2 (785 aa).

Residues 369-379 form an essential for ubiquitin-binding region; sequence LSLALVNSSNV. The tract at residues 592 to 617 is disordered; sequence GPQADEEAKESKEAAQLSEAAPVPTE. Residues 665–780 form the GAE domain; it reads APIPDLKVFE…QEIFEVNNLP (116 aa).

This sequence belongs to the adaptor complexes large subunit family. May interact with AP1S1/Sigma1A-adaptin and AP1S2/Sigma1B-adaptin. Probably does not interact with APB1. Interacts (via GAE domain) with RABEP1, NECAP1, CLINT1 and AFTPH/aftiphilin. As to quaternary structure, (Microbial infection) Interacts with HBV major surface antigen L. Interacts with HBV core protein C in a ubiquitin-dependent manner. As to expression, expressed in all but one (skeletal muscle) tissues examined.

Its subcellular location is the golgi apparatus membrane. The protein localises to the cytoplasmic vesicle membrane. It is found in the endosome membrane. Its function is as follows. May function in protein sorting in late endosomes or multivesucular bodies (MVBs). Functionally, (Microbial infection) Involved in MVB-assisted maturation of hepatitis B virus (HBV). The polypeptide is AP-1 complex subunit gamma-like 2 (AP1G2) (Homo sapiens (Human)).